We begin with the raw amino-acid sequence, 191 residues long: Signal peptidase IB (191 aa).

At 1–7 (MKKELLE) the chain is on the cytoplasmic side. Residues 8–28 (WIISIAVAFVILFIVGKFIVT) traverse the membrane as a helical segment. Topologically, residues 29-191 (PYTIKGESMD…YNFNPENTKN (163 aa)) are extracellular. Residues Ser-36 and Lys-77 contribute to the active site.

This sequence belongs to the peptidase S26 family.

Its subcellular location is the cell membrane. It catalyses the reaction Cleavage of hydrophobic, N-terminal signal or leader sequences from secreted and periplasmic proteins.. Functionally, essential for cell viability. The polypeptide is Signal peptidase IB (spsB) (Staphylococcus aureus (strain MRSA252)).